The chain runs to 106 residues: Urease subunit beta (106 aa).

This sequence belongs to the urease beta subunit family. Heterotrimer of UreA (gamma), UreB (beta) and UreC (alpha) subunits. Three heterotrimers associate to form the active enzyme.

It is found in the cytoplasm. The catalysed reaction is urea + 2 H2O + H(+) = hydrogencarbonate + 2 NH4(+). The protein operates within nitrogen metabolism; urea degradation; CO(2) and NH(3) from urea (urease route): step 1/1. This Prochlorococcus marinus (strain MIT 9301) protein is Urease subunit beta.